The following is an 872-amino-acid chain: Cellulose synthase catalytic subunit [UDP-forming] (872 aa).

4 consecutive transmembrane segments (helical) span residues 30–50 (SAFS…FIPL), 151–171 (ILGI…TQPF), 173–193 (PLAQ…VRRM), and 230–250 (LVCG…LVLG). The interval 271-364 (LWPSVDIFVP…FVSIFDCDHV (94 aa)) is catalytic subdomain A. D313 is an active-site residue. Substrate contacts are provided by D360 and D362. The interval 441-501 (KPLDEIGGIA…GQRIRWARGM (61 aa)) is catalytic subdomain B. Residue D457 is part of the active site. The next 5 helical transmembrane spans lie at 525 to 545 (VNAM…TAPL), 547 to 567 (FLLL…LFVL), 592 to 612 (IYET…LINP), 640 to 660 (IFLV…YFYG), and 668 to 688 (VVVS…AVAV). The PilZ domain maps to 694-790 (QVRRSHRVEM…QHIDFVQCTF (97 aa)). Residues 833-853 (SVKGIFRVLTSLVSWVVSFIP) traverse the membrane as a helical segment.

This sequence belongs to the glycosyltransferase 2 family. Mg(2+) serves as cofactor.

It localises to the cell inner membrane. It carries out the reaction [(1-&gt;4)-beta-D-glucosyl](n) + UDP-alpha-D-glucose = [(1-&gt;4)-beta-D-glucosyl](n+1) + UDP + H(+). It functions in the pathway glycan metabolism; bacterial cellulose biosynthesis. Activated by bis-(3'-5') cyclic diguanylic acid (c-di-GMP). Functionally, catalytic subunit of cellulose synthase. It polymerizes uridine 5'-diphosphate glucose to cellulose, which is produced as an extracellular component for mechanical and chemical protection at the onset of the stationary phase, when the cells exhibit multicellular behavior (rdar morphotype). Coexpression of cellulose and thin aggregative fimbriae (curli fimbrae or fibers) leads to a hydrophobic network with tightly packed cells embedded in a highly inert matrix that confers cohesion, elasticity and tissue-like properties to colonies. This chain is Cellulose synthase catalytic subunit [UDP-forming] (bcsA), found in Escherichia coli (strain K12).